Here is a 461-residue protein sequence, read N- to C-terminus: V-type ATP synthase beta chain 1 (461 aa).

The protein belongs to the ATPase alpha/beta chains family.

Its function is as follows. Produces ATP from ADP in the presence of a proton gradient across the membrane. The V-type beta chain is a regulatory subunit. This chain is V-type ATP synthase beta chain 1, found in Clostridium tetani (strain Massachusetts / E88).